The following is a 350-amino-acid chain: S-adenosylmethionine:tRNA ribosyltransferase-isomerase (350 aa).

Belongs to the QueA family. As to quaternary structure, monomer.

It is found in the cytoplasm. It carries out the reaction 7-aminomethyl-7-carbaguanosine(34) in tRNA + S-adenosyl-L-methionine = epoxyqueuosine(34) in tRNA + adenine + L-methionine + 2 H(+). It functions in the pathway tRNA modification; tRNA-queuosine biosynthesis. In terms of biological role, transfers and isomerizes the ribose moiety from AdoMet to the 7-aminomethyl group of 7-deazaguanine (preQ1-tRNA) to give epoxyqueuosine (oQ-tRNA). This is S-adenosylmethionine:tRNA ribosyltransferase-isomerase from Bacillus mycoides (strain KBAB4) (Bacillus weihenstephanensis).